We begin with the raw amino-acid sequence, 947 residues long: ATPase 10, plasma membrane-type (947 aa).

At 1–69 the chain is on the cytoplasmic side; that stretch reads MAEDLDKPLL…EKQENRFVKF (69 aa). Residues 70-89 form a helical membrane-spanning segment; that stretch reads LGFMWNPLSWVMEAAALMAI. Topologically, residues 90 to 101 are extracellular; the sequence is ALANSQSLGPDW. A helical membrane pass occupies residues 102–122; sequence EDFTGIVCLLLINATISFFEE. Residues 123-251 are Cytoplasmic-facing; it reads NNAGNAAAAL…GHFQQVLTSI (129 aa). A helical transmembrane segment spans residues 252–272; that stretch reads GNFCICSIAVGMVLEIIIMFP. Over 273 to 281 the chain is Extracellular; it reads VQHRSYRIG. A helical transmembrane segment spans residues 282–299; that stretch reads INNLLVLLIGGIPIAMPT. Topologically, residues 300 to 650 are cytoplasmic; sequence VLSVTLAIGS…TSRAIFQRMR (351 aa). Residue Asp-337 is the 4-aspartylphosphate intermediate of the active site. Positions 595 and 599 each coordinate Mg(2+). A helical transmembrane segment spans residues 651–672; the sequence is NYTVYAVSITIRIVLGFTLLAL. At 673–677 the chain is on the extracellular side; the sequence is IWEYD. A helical transmembrane segment spans residues 678–700; that stretch reads FPPFMVLIIAILNDGTIMTISKD. Topologically, residues 701–716 are cytoplasmic; that stretch reads RVRPSPTPESWKLNQI. The chain crosses the membrane as a helical span at residues 717–737; sequence FATGIVIGTYLALVTVLFYWI. Over 738–758 the chain is Extracellular; it reads IVSTTFFEKHFHVKSIANNSE. Residues 759–779 traverse the membrane as a helical segment; the sequence is QVSSAMYLQVSIISQALIFVT. Topologically, residues 780–791 are cytoplasmic; the sequence is RSRGWSFFERPG. A helical membrane pass occupies residues 792-812; sequence TLLIFAFILAQLAATLIAVYA. Residues 813-820 lie on the Extracellular side of the membrane; sequence NISFAKIT. Residues 821 to 841 form a helical membrane-spanning segment; it reads GIGWRWAGVIWLYSLIFYIPL. Residues 842–947 are Cytoplasmic-facing; the sequence is DVIKFVFHYA…QRMIRAAHTV (106 aa). Ser-897 and Ser-929 each carry phosphoserine. Thr-946 carries the phosphothreonine modification.

The protein belongs to the cation transport ATPase (P-type) (TC 3.A.3) family. Type IIIA subfamily. In terms of tissue distribution, found primarily in developing seeds. Expressed in guard cells, mesophyll cells, leaves and roots.

It is found in the membrane. The catalysed reaction is ATP + H2O + H(+)(in) = ADP + phosphate + 2 H(+)(out). Its function is as follows. The plasma membrane H(+) ATPase of plants and fungi generates a proton gradient that drives the active transport of nutrients by H(+)-symport. The resulting external acidification and/or internal alkinization may mediate growth responses. The polypeptide is ATPase 10, plasma membrane-type (AHA10) (Arabidopsis thaliana (Mouse-ear cress)).